The primary structure comprises 631 residues: MKSVILKPKNLVLLGAGVTTTYYLYKFFSAPSVSKDEGDKFGFNAPDPAALARAAVKEKKERFVKPSDNVCPILILYGTEYGLSAEVAKKLEESINSKLEGFWARIIDMEEYEIIEFEKEQIVLIITSTYGDGVPPTTARPFFDYLEANRLNLSHIQFSVLALGDRSYPHYCAAGKTLDKQFEEMGAKRFRDRIEVDQEDWTCFDRYIDTVCGLVPTLGGVEKREGQDYLYEKAKLFALSQGKYNKKKPYSSKLLVKRVLTKGDKVGIHLEFELGDSELKYVPGDALAILPDNAASEVSAIISLLKLSPSFKVSTPGWHYQEGEQPNPSQITLTHILTKCFDIHNCKPELLQLLKDNVKNQQEKEKLTNLLAQGTGKSNTQLVEFLENHHLIDILKMFSSARPPIDDLLAQLAKLLPRYYSIASSMSENKLAVSLCVAVVKYDLHGSERVGIASTHMADRMNVGDRVSIFINNNPDFRLPEDPTTPILMVGPGTGIAPFVSFIQERKALGHTGENHLYFGCRRSDEDFLYSKELQQYHNDGLIKLYTAFSRETSQKVYVQNRLLENSQQICDLINAGGHIYICGDAKSMAPQVHETLSLIITKHMSIDEADAQALLHKLEKEKRYQKDVWF.

The Flavodoxin-like domain occupies 73-212 (ILILYGTEYG…CFDRYIDTVC (140 aa)). Residues 79–83 (TEYGL) and 160–191 (VLALGDRSYPHYCAAGKTLDKQFEEMGAKRFR) each bind FMN. One can recognise an FAD-binding FR-type domain in the interval 247 to 480 (KKPYSSKLLV…INNNPDFRLP (234 aa)). 249–299 (PYSSKLLVKRVLTKGDKVGIHLEFELGDSELKYVPGDALAILPDNAASEVS) provides a ligand contact to FAD. 504–630 (QERKALGHTG…KEKRYQKDVW (127 aa)) is an NADP(+) binding site.

It depends on FAD as a cofactor. The cofactor is FMN.

Functionally, probable NADPH oxidoreductase that controls development beyond the mound stage. This is NADPH oxidoreductase A (redA) from Dictyostelium discoideum (Social amoeba).